Consider the following 155-residue polypeptide: Aspartate carbamoyltransferase regulatory chain (155 aa).

The Zn(2+) site is built by C109, C114, C138, and C141.

This sequence belongs to the PyrI family. Contains catalytic and regulatory chains. It depends on Zn(2+) as a cofactor.

Functionally, involved in allosteric regulation of aspartate carbamoyltransferase. The protein is Aspartate carbamoyltransferase regulatory chain of Vibrio cholerae serotype O1 (strain ATCC 39541 / Classical Ogawa 395 / O395).